Consider the following 299-residue polypeptide: Oxygen-dependent coproporphyrinogen-III oxidase (299 aa).

Substrate is bound at residue serine 92. Positions 96 and 106 each coordinate a divalent metal cation. The Proton donor role is filled by histidine 106. 108 to 110 (NVR) provides a ligand contact to substrate. A divalent metal cation-binding residues include histidine 145 and histidine 175. The important for dimerization stretch occupies residues 240–275 (YVEFNLVWDRGTLFGLQTGGRTESILMSMPPLVRWE). 258-260 (GGR) lines the substrate pocket.

The protein belongs to the aerobic coproporphyrinogen-III oxidase family. In terms of assembly, homodimer. A divalent metal cation serves as cofactor.

It is found in the cytoplasm. It carries out the reaction coproporphyrinogen III + O2 + 2 H(+) = protoporphyrinogen IX + 2 CO2 + 2 H2O. The protein operates within porphyrin-containing compound metabolism; protoporphyrin-IX biosynthesis; protoporphyrinogen-IX from coproporphyrinogen-III (O2 route): step 1/1. Its function is as follows. Involved in the heme biosynthesis. Catalyzes the aerobic oxidative decarboxylation of propionate groups of rings A and B of coproporphyrinogen-III to yield the vinyl groups in protoporphyrinogen-IX. In Shigella flexneri, this protein is Oxygen-dependent coproporphyrinogen-III oxidase.